A 50-amino-acid polypeptide reads, in one-letter code: Nosiheptide precursor (50 aa).

Residues 38 to 39 (SC) constitute a cross-link (thiazole-4-carboxylic acid (Ser-Cys)). The segment at residues 38 to 46 (SCTTCECCC) is a cross-link (3-hydroxypyridine-2,5-dicarboxylic acid (Ser-Cys) (with S-47)). Residues 38–47 (SCTTCECCCS) constitute a cross-link (3-hydroxypyridine-2,5-dicarboxylic acid (Ser-Ser) (with C-46)). A cross-link (thiazole-4-carboxylic acid (Thr-Cys)) is located at residues 41–42 (TC). E43 is modified (4-hydroxyglutamate). The thiazole-4-carboxylic acid (Glu-Cys) cross-link spans 43–44 (EC). Positions 43–45 (ECC) form a cross-link, 2-(cystein-S-ylcarbonyl)-3-methyl-4-(glutam-5-yloxy)methylindole (Glu-Cys). Residues 45-46 (CC) constitute a cross-link (thiazole-4-carboxylic acid (Cys-Cys)). Residues 47–48 (SC) constitute a cross-link (thiazole-4-carboxylic acid (Ser-Cys)). A 2,3-didehydroalanine (Ser) modification is found at S49. The residue at position 49 (S49) is a Serine amide; atypical.

This sequence belongs to the thiocillin family. In terms of processing, the amidation of Ser-49 is produced by the oxidative cleavage of Ser-50 rather than of a glycine, as in eukaryotes.

Functionally, inhibits bacterial protein biosynthesis by binding to ribosomes. Specifically, binds to the complex of 23S rRNA and ribosomal protein L11 (RPLK) in the 50S ribosomal subunit. While allowing a weak binding of elongation factor G (EF-G) to the ribosome and subsequent GTP-hydrolysis, probably impairs conformational changes in both the ribosome and EF-G which are necessary for translocation. In vitro, inhibits Gram-positive bacteria S.aureus strain 209P (MIC=0.0009 ug/ml), S.aureus strain 133 (MIC=0.0019 ug/ml), S.aureus strain B3 (MIC=0.003 ug/ml), S.aureus strain Hb (MIC=0.003 ug/ml), M.citreus strain ATCC 8411 (MIC=0.0038 ug/ml), M.lysodeikticus strain ATCC 4698 (MIC=0.003 ug/ml), S.lutea strain ATCC 9341 (MIC=0.0011 ug/ml), S.faecalis strain ATCC 9790 (MIC=0.0007 ug/ml), S.viridans (MIC=0.0065 ug/ml), S.pyogenes hemolyticus strain Dig7 (MIC=0.00028 ug/ml), D.pneumoniae strain Til (MIC=0.00015 ug/ml), N.catrrhalis (MIC=0.0017 ug/ml), L.casei strain ATCC 6633 (MIC=0.003 ug/ml), B.cereus strain ATCC 6630 (MIC=0.0071 ug/ml) and various isolates of L.monocytogenes. In vitro, inhibits Gram-negative bacterium P.multocida strain A125 (MIC=0.0024 ug/ml) but not M.smegmatis strain ATCC 6630, S.typhimurium, A.aerogenes strain ATCC 8308, P.vulgaris, K.pneumoniae strain ATCC 10031, S.marcescens strain A476, P.aeruginosa strain Bass or B.bronchiseptica strain CN387. Does not inhibit Gram-negative bacterium E.coli strain ATCC 9637 but does inhibit purified ribosomes from E.coli. In vivo, has no systemic effect in mice infected with staphylococci or streptococci when applied orally or subcutaneously. Has a local effect in mice infected subcutaneously or intraperitoneally with staphylococci when applied immediately afterwards. Is not toxic to mice. The protein is Nosiheptide precursor of Streptomyces actuosus.